The following is a 305-amino-acid chain: Taste receptor type 2 member 136 (305 aa).

The Extracellular portion of the chain corresponds to 1 to 9 (MMSFLVSIA). The chain crosses the membrane as a helical span at residues 10-30 (SIAMLVKIVLGTFANVFIVLV). The Cytoplasmic segment spans residues 31 to 46 (NFTDCIKKRKFLLADR). The helical transmembrane segment at 47–67 (ILTVLAIFRFDLLWIILMNWS) threads the bilayer. Over 68 to 69 (SS) the chain is Extracellular. A helical transmembrane segment spans residues 70 to 90 (VFHVGLYFQVRFCICVVWIVT). Topologically, residues 91–99 (NHFNTWLAN) are cytoplasmic. Residues 100–120 (ILSILYLLKIDNFSNLIFLGL) traverse the membrane as a helical segment. Over 121–127 (KGKIKCP) the chain is Extracellular. Residues 128–148 (YIVLLPCFVLLFPNLIMVTIC) form a helical membrane-spanning segment. Residues 149–176 (ETTQANGHQGNLTGKTKLTYFTNLIAMT) are Cytoplasmic-facing. A helical transmembrane segment spans residues 177 to 197 (FTLGSLVPFTTFMICFLLLIC). At 198–223 (SLCKHLRTMRLYGKGSQGPSASTHIK) the chain is on the extracellular side. Residues 224–244 (VLQVLISFLLLFSMFILLLII) traverse the membrane as a helical segment. Topologically, residues 245–305 (SDYNYTKSLE…ARFWLKEKKP (61 aa)) are cytoplasmic.

Belongs to the G-protein coupled receptor T2R family.

It localises to the membrane. Functionally, putative taste receptor which may play a role in the perception of bitterness. The chain is Taste receptor type 2 member 136 (Tas2r136) from Mus musculus (Mouse).